The following is a 94-amino-acid chain: Citrate lyase acyl carrier protein (94 aa).

An O-(phosphoribosyl dephospho-coenzyme A)serine modification is found at serine 14.

Belongs to the CitD family. As to quaternary structure, oligomer with a subunit composition of (alpha,beta,gamma)6.

It localises to the cytoplasm. Covalent carrier of the coenzyme of citrate lyase. In Fusobacterium nucleatum subsp. nucleatum (strain ATCC 25586 / DSM 15643 / BCRC 10681 / CIP 101130 / JCM 8532 / KCTC 2640 / LMG 13131 / VPI 4355), this protein is Citrate lyase acyl carrier protein.